The sequence spans 89 residues: Large ribosomal subunit protein bL27 (89 aa).

The disordered stretch occupies residues 1 to 20 (MAHKKAGGSSRNGRDSAGKR).

It belongs to the bacterial ribosomal protein bL27 family.

This chain is Large ribosomal subunit protein bL27, found in Rhodopseudomonas palustris (strain HaA2).